The chain runs to 436 residues: Methanethiol oxidase (436 aa).

A signal peptide spans 1–24 (MKRREFGALAAGALAMGLPFRAFA).

It belongs to the selenium-binding protein family.

It localises to the periplasm. The catalysed reaction is methanethiol + O2 + H2O = hydrogen sulfide + formaldehyde + H2O2 + H(+). The protein operates within organosulfur degradation. In terms of biological role, catalyzes the oxidation of methanethiol. This is Methanethiol oxidase from Ruegeria pomeroyi (strain ATCC 700808 / DSM 15171 / DSS-3) (Silicibacter pomeroyi).